A 227-amino-acid chain; its full sequence is Transcriptional regulatory protein CusR (227 aa).

The region spanning 2 to 116 (KLLIVEDEKK…ELLARVRTLL (115 aa)) is the Response regulatory domain. Aspartate 51 is modified (4-aspartylphosphate). The ompR/PhoB-type DNA-binding region spans 125 to 223 (ESQFQVADLM…VRGVGYMLEV (99 aa)).

Post-translationally, phosphorylated by CusS.

The protein localises to the cytoplasm. Its function is as follows. Member of the two-component regulatory system CusS/CusR involved in response to copper and silver. This is Transcriptional regulatory protein CusR (cusR) from Escherichia coli O6:H1 (strain CFT073 / ATCC 700928 / UPEC).